We begin with the raw amino-acid sequence, 126 residues long: Large ribosomal subunit protein bL19 (126 aa).

The protein belongs to the bacterial ribosomal protein bL19 family.

This protein is located at the 30S-50S ribosomal subunit interface and may play a role in the structure and function of the aminoacyl-tRNA binding site. The chain is Large ribosomal subunit protein bL19 from Prochlorococcus marinus (strain MIT 9312).